The following is a 381-amino-acid chain: Opsin-1 (381 aa).

Over 1 to 53 (MASASLISEPSFSAYWGGSGGFANQTVVDKVPPEMLYLVDPHWYQFPPMNPLW) the chain is Extracellular. Asn-24 carries an N-linked (GlcNAc...) asparagine glycan. A helical membrane pass occupies residues 54 to 78 (HGLLGFVIGVLGVISVIGNGMVIYI). At 79–90 (FSTTKSLRTPSN) the chain is on the cytoplasmic side. A helical transmembrane segment spans residues 91–115 (LLVVNLAFSDFLMMFTMSAPMGINC). The Extracellular segment spans residues 116-130 (YYETWVLGPFMCELY). A disulfide bond links Cys-127 and Cys-204. Residues 131–150 (ALFGSLFGCGSIWTMTMIAL) form a helical membrane-spanning segment. The Cytoplasmic portion of the chain corresponds to 151–169 (DRYNVIVKGLSAKPMTNKT). A helical membrane pass occupies residues 170–193 (AMLRILFIWAFSVAWTIMPLFGWN). The Extracellular portion of the chain corresponds to 194–217 (RYVPEGNMTACGTDYLTKDWVSRS). Asn-200 carries N-linked (GlcNAc...) asparagine glycosylation. The helical transmembrane segment at 218–245 (YILVYSFFVYLLPLGTIIYSYFFILQAV) threads the bilayer. Residues 246–280 (SAHEKQMREQRKKMNVASLRSAEASQTSAECKLAK) lie on the Cytoplasmic side of the membrane. A helical transmembrane segment spans residues 281–304 (VALMTISLWFFGWTPYLIINFTGI). Topologically, residues 305–311 (FETMKIS) are extracellular. Residues 312-336 (PLLTIWGSLFAKANAVFNPIVYGIS) form a helical membrane-spanning segment. Lys-323 bears the N6-(retinylidene)lysine mark. The Cytoplasmic portion of the chain corresponds to 337-381 (HPKYRAALEKKFPSLACASSSDDNTSVASGATTVSDEKSEKSASA). Positions 354 to 370 (ASSSDDNTSVASGATTV) are enriched in polar residues. The tract at residues 354–381 (ASSSDDNTSVASGATTVSDEKSEKSASA) is disordered. Positions 371-381 (SDEKSEKSASA) are enriched in basic and acidic residues.

Belongs to the G-protein coupled receptor 1 family. Opsin subfamily. Post-translationally, phosphorylated on some or all of the serine and threonine residues present in the C-terminal region.

It is found in the cell projection. It localises to the rhabdomere membrane. In terms of biological role, visual pigments are the light-absorbing molecules that mediate vision. They consist of an apoprotein, opsin, covalently linked to cis-retinal. This chain is Opsin-1 (Lo1), found in Schistocerca gregaria (Desert locust).